Consider the following 185-residue polypeptide: HTH-type transcriptional regulator SAR2658 (185 aa).

One can recognise an HTH tetR-type domain in the interval 6-66; sequence KENRQRIEEI…YVIQRDLDIF (61 aa). The segment at residues 29–48 is a DNA-binding region (H-T-H motif); that stretch reads SMNRIAKELGIGMGTLYRHF.

This Staphylococcus aureus (strain MRSA252) protein is HTH-type transcriptional regulator SAR2658.